A 225-amino-acid chain; its full sequence is tRNA (guanine-N(1)-)-methyltransferase (225 aa).

S-adenosyl-L-methionine-binding positions include Gly-112 and 132-137; that span reads IGDYVL.

Belongs to the RNA methyltransferase TrmD family. Homodimer.

It localises to the cytoplasm. It catalyses the reaction guanosine(37) in tRNA + S-adenosyl-L-methionine = N(1)-methylguanosine(37) in tRNA + S-adenosyl-L-homocysteine + H(+). Functionally, specifically methylates guanosine-37 in various tRNAs. The chain is tRNA (guanine-N(1)-)-methyltransferase from Bacteroides fragilis (strain ATCC 25285 / DSM 2151 / CCUG 4856 / JCM 11019 / LMG 10263 / NCTC 9343 / Onslow / VPI 2553 / EN-2).